Reading from the N-terminus, the 158-residue chain is Phosphopantetheine adenylyltransferase (158 aa).

Thr9 contacts substrate. ATP contacts are provided by residues Thr9–Phe10 and His17. Residues Lys41, Leu73, and Arg87 each coordinate substrate. Residues Gly88–Arg90, Glu98, and Trp123–Thr129 contribute to the ATP site.

It belongs to the bacterial CoaD family. As to quaternary structure, homohexamer. Mg(2+) serves as cofactor.

The protein resides in the cytoplasm. It catalyses the reaction (R)-4'-phosphopantetheine + ATP + H(+) = 3'-dephospho-CoA + diphosphate. It participates in cofactor biosynthesis; coenzyme A biosynthesis; CoA from (R)-pantothenate: step 4/5. In terms of biological role, reversibly transfers an adenylyl group from ATP to 4'-phosphopantetheine, yielding dephospho-CoA (dPCoA) and pyrophosphate. The sequence is that of Phosphopantetheine adenylyltransferase from Histophilus somni (strain 129Pt) (Haemophilus somnus).